Consider the following 1775-residue polypeptide: Atrochrysone carboxylic acid synthase (1775 aa).

Residues 29-258 (RSQSKTESGW…QLPVYGGLCH (230 aa)) form an N-terminal acylcarrier protein transacylase domain (SAT) region. The 431-residue stretch at 391 to 821 (DSSIAIVGMA…GGNTSLLIEE (431 aa)) folds into the Ketosynthase family 3 (KS3) domain. Residues cysteine 564, histidine 699, and histidine 740 each act as for beta-ketoacyl synthase activity in the active site. Residues 921–1241 (FVFSGQGSFY…MAQLHNLGVD (321 aa)) are malonyl-CoA:ACP transacylase (MAT) domain. Residues 1305–1626 (TSLVHRLVCE…RSLINTFFSP (322 aa)) are product template (PT) domain. The tract at residues 1309–1455 (HRLVCESVQE…WLEEWSPMTH (147 aa)) is N-terminal hotdog fold. The region spanning 1309–1621 (HRLVCESVQE…FRTFPRSLIN (313 aa)) is the PKS/mFAS DH domain. The active-site Proton acceptor; for dehydratase activity is histidine 1341. The interval 1472–1621 (TANRLSRDMV…FRTFPRSLIN (150 aa)) is C-terminal hotdog fold. Residue aspartate 1532 is the Proton donor; for dehydratase activity of the active site. The segment at 1672 to 1694 (SRTVMDSSDSSPATTLTPPTLPS) is disordered. The segment covering 1677–1689 (DSSDSSPATTLTP) has biased composition (low complexity). Residues 1698 to 1775 (STESPIVHRA…DLKAWLIDYC (78 aa)) enclose the Carrier domain. An O-(pantetheine 4'-phosphoryl)serine modification is found at serine 1735.

In terms of tissue distribution, endocrocin is specifically produced in conidia.

It catalyses the reaction holo-[ACP] + 8 malonyl-CoA + 8 H(+) = atrochrysone carboxyl-[ACP] + 8 CO2 + 8 CoA + 2 H2O. It functions in the pathway secondary metabolite biosynthesis. Functionally, non-reducing polyketide synthase; part of the gene cluster that mediates the biosynthesis of endocrocin, a simple anthraquinone interesting for many biotechnological applications. The pathway begins with the synthesis of atrochrysone thioester by the polyketide synthase (PKS) encA. The atrochrysone carboxyl ACP thioesterase encB then breaks the thioester bond and releases the atrochrysone carboxylic acid from encA. The atrochrysone carboxylic acid is then converted to endocrocin anthrone which is further oxidized into endocrocin by the anthrone oxygenase encC. The exact function of encD has not been identified yet, but it negatively regulates endocrocin production, likely through the modification of endocrocin itself. In Aspergillus fumigatus (strain ATCC MYA-4609 / CBS 101355 / FGSC A1100 / Af293) (Neosartorya fumigata), this protein is Atrochrysone carboxylic acid synthase.